The sequence spans 117 residues: Holo-[acyl-carrier-protein] synthase (117 aa).

Positions 8 and 58 each coordinate Mg(2+).

Belongs to the P-Pant transferase superfamily. AcpS family. Mg(2+) serves as cofactor.

Its subcellular location is the cytoplasm. The catalysed reaction is apo-[ACP] + CoA = holo-[ACP] + adenosine 3',5'-bisphosphate + H(+). In terms of biological role, transfers the 4'-phosphopantetheine moiety from coenzyme A to a Ser of acyl-carrier-protein. In Latilactobacillus sakei subsp. sakei (strain 23K) (Lactobacillus sakei subsp. sakei), this protein is Holo-[acyl-carrier-protein] synthase.